Consider the following 275-residue polypeptide: Large ribosomal subunit protein uL2 (275 aa).

Disordered stretches follow at residues 28-59 and 224-275; these read KPYAPLLDTQSSTAGRNNNGHITTRHKGGGHK and AMNP…RHKR. Polar residues predominate over residues 35 to 46; the sequence is DTQSSTAGRNNN. Positions 50-59 are enriched in basic residues; that stretch reads TTRHKGGGHK.

This sequence belongs to the universal ribosomal protein uL2 family. In terms of assembly, part of the 50S ribosomal subunit. Forms a bridge to the 30S subunit in the 70S ribosome.

In terms of biological role, one of the primary rRNA binding proteins. Required for association of the 30S and 50S subunits to form the 70S ribosome, for tRNA binding and peptide bond formation. It has been suggested to have peptidyltransferase activity; this is somewhat controversial. Makes several contacts with the 16S rRNA in the 70S ribosome. The sequence is that of Large ribosomal subunit protein uL2 from Paraburkholderia phymatum (strain DSM 17167 / CIP 108236 / LMG 21445 / STM815) (Burkholderia phymatum).